We begin with the raw amino-acid sequence, 91 residues long: Salivary lectin pathway inhibitor (91 aa).

A signal peptide spans 1–21; sequence MGLTETTLVLVSLAFFASAVA. 2 N-linked (GlcNAc...) asparagine glycosylation sites follow: Asn26 and Asn87.

This sequence belongs to the salp14 family. In terms of processing, glycosylated; deglycosylation largely abrogates the complement inhibitory effect. Nymph salivary gland (at protein level). Saliva (at protein level). Not detected in midgut.

Its subcellular location is the secreted. Its function is as follows. Inhibits the lectin pathway of complement system activation in the host by reducing binding of mannose-binding lectin and L-ficolin to their ligands. Does not affect the classical and alternative pathways of complement system activation in the host. Functionally, (Microbial infection) Protects Borrelia garinii (strain A87S) from host complement-mediated killing by preventing deposition of host C5b-9 membrane attack complexes on the surface of spirochetes. Inhibits phagocytosis of B.garinii (strain A87S) by human neutrophils. Impairs Borrelia-induced complement-mediated chemotaxis of human polymorphonuclear leukocytes. In terms of biological role, (Microbial infection) Protects Borrelia burgdorferi (strain N40), which is resistant to normal human serum, from Borrelia-opsonizing antibody-mediated complement-dependent killing. In Ixodes scapularis (Black-legged tick), this protein is Salivary lectin pathway inhibitor.